A 147-amino-acid chain; its full sequence is Flagellar assembly factor FliW (147 aa).

Belongs to the FliW family. Interacts with translational regulator CsrA and flagellin(s).

The protein resides in the cytoplasm. Acts as an anti-CsrA protein, binds CsrA and prevents it from repressing translation of its target genes, one of which is flagellin. Binds to flagellin and participates in the assembly of the flagellum. This chain is Flagellar assembly factor FliW, found in Chromobacterium violaceum (strain ATCC 12472 / DSM 30191 / JCM 1249 / CCUG 213 / NBRC 12614 / NCIMB 9131 / NCTC 9757 / MK).